We begin with the raw amino-acid sequence, 310 residues long: uncharacterized protein (310 aa).

The tract at residues 1 to 70 (MAGNSQRRGA…ARGRTDETET (70 aa)) is disordered. The span at 49-62 (AAKRAKAQQRRPAR) shows a compositional bias: basic residues. 3 residues coordinate S-adenosyl-L-methionine: Gly-262, Val-282, and Leu-291.

The protein belongs to the class IV-like SAM-binding methyltransferase superfamily. RNA methyltransferase TrmH family.

This is an uncharacterized protein from Mycobacterium marinum (strain ATCC BAA-535 / M).